Reading from the N-terminus, the 1009-residue chain is Cilia- and flagella-associated protein 70 (1009 aa).

The segment covering 410–428 has biased composition (basic and acidic residues); that stretch reads NLKEDKPVKEKDIDGRPRP. Positions 410 to 457 are disordered; sequence NLKEDKPVKEKDIDGRPRPGDVQAPSIKSQSSDTPLEGEPPLSHNPEG. TPR repeat units lie at residues 498-531, 635-668, 669-702, 704-736, 888-921, 923-954, and 956-988; these read PPLT…EYYR, SEQL…EPQN, LDHW…NQSH, HSLL…EPTN, HFIF…SPSC, TWLG…NNYN, and EVWA…KLKD.

The protein belongs to the CFAP70 family.

Its subcellular location is the cell projection. It localises to the cilium. The protein resides in the flagellum. It is found in the cytoplasm. The protein localises to the cytoskeleton. Its subcellular location is the flagellum basal body. It localises to the cilium axoneme. Its function is as follows. Axoneme-binding protein that plays a role in the regulation of ciliary motility and cilium length. This chain is Cilia- and flagella-associated protein 70, found in Macaca fascicularis (Crab-eating macaque).